Reading from the N-terminus, the 455-residue chain is Keratin, type I cuticular Ha5 (455 aa).

The interval 1–97 (MASKCLKASF…FGEGILTGNE (97 aa)) is head. An IF rod domain is found at 97–408 (EKETMQSLND…GLLESEDSKL (312 aa)). The coil 1A stretch occupies residues 98-132 (KETMQSLNDRLASYLEKVRQLEQENASLESRIREW). Residues 133 to 143 (CEQQVPYMCPD) are linker 1. The tract at residues 144 to 244 (YQSYFRTMEE…HEEEVNSLRC (101 aa)) is coil 1B. Positions 245–260 (QLGDRLNVEVDAAPPV) are linker 12. The segment at 261-404 (DLNRVLDEMR…NTYRGLLESE (144 aa)) is coil 2. The interval 405–455 (DSKLPCNPCAPDYSSSKSCLPCLPAVSCSTGAARTTCSPRPVCVPCPGGRF) is tail.

The protein belongs to the intermediate filament family.

The chain is Keratin, type I cuticular Ha5 from Mus musculus (Mouse).